A 619-amino-acid polypeptide reads, in one-letter code: TOX high mobility group box family member 4 (619 aa).

2 disordered regions span residues Leu-155–Val-227 and Asp-306–Pro-335. Residue Thr-176 is modified to Phosphothreonine. 2 positions are modified to phosphoserine: Ser-178 and Ser-182. The span at Leu-183–Arg-193 shows a compositional bias: basic and acidic residues. Residues Lys-208 to Lys-218 are compositionally biased toward basic residues. A Nuclear localization signal motif is present at residues Lys-213–Lys-218. The HMG box DNA-binding region spans Pro-223–Lys-291. Thr-313 is subject to Phosphothreonine. Ser-315 bears the Phosphoserine mark. A compositionally biased stretch (low complexity) spans Thr-320–Pro-335. An Asymmetric dimethylarginine modification is found at Arg-479. 6 positions are modified to phosphoserine: Ser-531, Ser-548, Ser-550, Ser-558, Ser-560, and Ser-565.

In terms of assembly, component of the PNUTS-PP1 phosphatase complex, composed of PPP1R10/PNUTS, TOX4, WDR82 and PPP1CA or PPP1CB or PPP1CC. Interacts with PPP1R10/PNUTS. Interacts with FOXO1 and CREB1 (increased by cAMP); FOXO1 and CREB1 are required for full induction of TOX4-dependent activity and the interactions are inhibited by insulin.

It is found in the nucleus. It localises to the chromosome. Its activity is regulated as follows. In liver, recruited to target gene promoters following treatment with dexamethasone and cAMP. Binding is decreased in presence of insulin. Functionally, transcription factor that modulates cell fate reprogramming from the somatic state to the pluripotent and neuronal fate. In liver, controls the expression of hormone-regulated gluconeogenic genes such as G6PC1 and PCK1. This regulation is independent of the insulin receptor activation. Also acts as a regulatory component of protein phosphatase 1 (PP1) complexes. Component of the PNUTS-PP1 protein phosphatase complex, a PP1 complex that regulates RNA polymerase II transcription pause-release. PNUTS-PP1 also plays a role in the control of chromatin structure and cell cycle progression during the transition from mitosis into interphase. The chain is TOX high mobility group box family member 4 from Mus musculus (Mouse).